Here is a 346-residue protein sequence, read N- to C-terminus: Transposase for insertion sequence element IS1533 (346 aa).

It belongs to the transposase IS1111A/IS1328/IS1533 family.

Functionally, required for the transposition of the insertion element. The polypeptide is Transposase for insertion sequence element IS1533 (tnhA) (Leptospira borgpetersenii).